A 143-amino-acid chain; its full sequence is Protein RJ1 (143 aa).

The first 26 residues, 1-26 (MARVMTRGMARVSTLATVRVSTLARA), serve as a signal peptide directing secretion.

This chain is Protein RJ1 (RJ1), found in Human herpesvirus 6A (strain Uganda-1102) (HHV-6 variant A).